Here is a 672-residue protein sequence, read N- to C-terminus: tRNA 5-methylaminomethyl-2-thiouridine biosynthesis bifunctional protein MnmC (672 aa).

The tRNA (mnm(5)s(2)U34)-methyltransferase stretch occupies residues 1 to 241 (MLKVTTAHIH…KRECLQGFKP (241 aa)). Residues 271–672 (IGGGISSLFS…RKLLKGTPVK (402 aa)) are FAD-dependent cmnm(5)s(2)U34 oxidoreductase.

The protein in the N-terminal section; belongs to the methyltransferase superfamily. tRNA (mnm(5)s(2)U34)-methyltransferase family. It in the C-terminal section; belongs to the DAO family. The cofactor is FAD.

It localises to the cytoplasm. It catalyses the reaction 5-aminomethyl-2-thiouridine(34) in tRNA + S-adenosyl-L-methionine = 5-methylaminomethyl-2-thiouridine(34) in tRNA + S-adenosyl-L-homocysteine + H(+). Catalyzes the last two steps in the biosynthesis of 5-methylaminomethyl-2-thiouridine (mnm(5)s(2)U) at the wobble position (U34) in tRNA. Catalyzes the FAD-dependent demodification of cmnm(5)s(2)U34 to nm(5)s(2)U34, followed by the transfer of a methyl group from S-adenosyl-L-methionine to nm(5)s(2)U34, to form mnm(5)s(2)U34. In Mannheimia succiniciproducens (strain KCTC 0769BP / MBEL55E), this protein is tRNA 5-methylaminomethyl-2-thiouridine biosynthesis bifunctional protein MnmC.